An 865-amino-acid polypeptide reads, in one-letter code: Xylosyltransferase 2 (865 aa).

Topologically, residues 1–15 (MVASARVQKLVRRYK) are cytoplasmic. The helical; Signal-anchor for type II membrane protein transmembrane segment at 16–36 (LAIATALAILLLQGLVVWSFS) threads the bilayer. Residues 37–865 (GLEEDEPGEK…GPVKADGRLR (829 aa)) lie on the Lumenal side of the membrane. A disordered region spans residues 39–155 (EEDEPGEKGR…SVEGAPQPTD (117 aa)). Over residues 53-65 (RPLDPGEGSKDTD) the composition is skewed to basic and acidic residues. A compositionally biased stretch (basic residues) spans 73 to 82 (SAGRRHGRWR). The N-linked (GlcNAc...) asparagine glycan is linked to N122. 4 cysteine pairs are disulfide-bonded: C162–C190, C206–C448, C467–C480, and C469–C478. UDP-alpha-D-xylose is bound by residues V239, D267, and 296 to 298 (TIW). N-linked (GlcNAc...) asparagine glycosylation occurs at N327. 400–401 (DW) is a UDP-alpha-D-xylose binding site. Residues S481 and 504–505 (RK) each bind UDP-alpha-D-xylose. 2 cysteine pairs are disulfide-bonded: C581–C833 and C826–C839. An N-linked (GlcNAc...) asparagine glycan is attached at N683.

Belongs to the glycosyltransferase 14 family. XylT subfamily. As to quaternary structure, monomer. Requires Mg(2+) as cofactor. The cofactor is Mn(2+). In terms of processing, contains disulfide bonds. As to expression, detected in brain, liver, lung, kidney, heart, spleen and testis, and at lower levels in skeletal muscle.

The protein resides in the golgi apparatus membrane. Its subcellular location is the secreted. The catalysed reaction is UDP-alpha-D-xylose + L-seryl-[protein] = 3-O-(beta-D-xylosyl)-L-seryl-[protein] + UDP + H(+). It participates in glycan metabolism; chondroitin sulfate biosynthesis. The protein operates within glycan metabolism; heparan sulfate biosynthesis. In terms of biological role, catalyzes the first step in the biosynthesis of chondroitin sulfate, heparan sulfate and dermatan sulfate proteoglycans, such as DCN. Transfers D-xylose from UDP-D-xylose to specific serine residues of the core protein. In Mus musculus (Mouse), this protein is Xylosyltransferase 2 (Xylt2).